A 912-amino-acid chain; its full sequence is Transcription factor bHLH140 (912 aa).

The disordered stretch occupies residues 1-57; the sequence is MDDFNLRSENPNSSSTTSSSSSSFHRHKSETGNTKRSRSTSTLSTDPQSVAARDRRH. The segment covering 13–23 has biased composition (low complexity); sequence SSSTTSSSSSS. Residues 43–92 form the bHLH domain; it reads LSTDPQSVAARDRRHRISDRFKILQSMVPGGAKMDTVSMLDEAISYVKFL. 234-241 lines the ATP pocket; that stretch reads GPPGSGKS. Residues 511–690 form the Macro domain; sequence KAKASQKNID…KYKGSQDKAV (180 aa). Positions 657–666 are enriched in polar residues; that stretch reads PKRSSQTAVS. The segment at 657 to 706 is disordered; sequence PKRSSQTAVSDSGEDIKEDSERNKKYKGSQDKAVTNNLESESLEDTRGSG. Residues 720 to 829 enclose the HIT domain; it reads LHSIAMHPER…SQDFNSDSLK (110 aa). The C2H2-type zinc finger occupies 870 to 893; that stretch reads LRCNRCRSAHPNIPKLKSHVRSCH.

Homodimer.

The protein resides in the nucleus. The polypeptide is Transcription factor bHLH140 (BHLH140) (Arabidopsis thaliana (Mouse-ear cress)).